Here is a 396-residue protein sequence, read N- to C-terminus: Inositol polyphosphate multikinase (396 aa).

Low complexity predominate over residues 1–13 (MAAEPPALRLRPP). Residues 1 to 22 (MAAEPPALRLRPPGSTGDSPPV) are disordered. An N-acetylalanine modification is found at Ala-2. Ser-19 carries the phosphoserine modification. Lys-58 serves as a coordination point for ATP. A substrate-binding site is contributed by Arg-65. ATP is bound by residues 114 to 116 (EDV) and Asp-127. Substrate is bound by residues Lys-129, 143–150 (KIQQQVSK), and Gln-179. The Nuclear localization signal signature appears at 300-310 (RHRKLYAKKHQ). Asp-365 contacts ATP.

This sequence belongs to the inositol phosphokinase (IPK) family. Requires Mg(2+) as cofactor.

The protein resides in the nucleus. It carries out the reaction 1D-myo-inositol 1,4,5-trisphosphate + 2 ATP = 1D-myo-inositol 1,3,4,5,6-pentakisphosphate + 2 ADP + 2 H(+). It catalyses the reaction 1D-myo-inositol 1,3,4,6-tetrakisphosphate + ATP = 1D-myo-inositol 1,3,4,5,6-pentakisphosphate + ADP + H(+). The enzyme catalyses 1-octadecanoyl-2-(5Z,8Z,11Z,14Z)-eicosatetraenoyl-sn-glycero-3-phospho-1D-myo-inositol 4,5-bisphosphate + ATP = 1-octadecanoyl-2-(5Z,8Z,11Z,14Z-eicosatetraenoyl)-sn-glycero-3-phospho-(1D-myo-inositol 3,4,5-triphosphate) + ADP + H(+). The catalysed reaction is a 1,2-diacyl-sn-glycero-3-phospho-(1D-myo-inositol-4,5-bisphosphate) + ATP = a 1,2-diacyl-sn-glycero-3-phospho-(1D-myo-inositol-3,4,5-trisphosphate) + ADP + H(+). It carries out the reaction 1D-myo-inositol 1,4,5,6-tetrakisphosphate + ATP = 1D-myo-inositol 1,3,4,5,6-pentakisphosphate + ADP + H(+). The protein operates within phospholipid metabolism; phosphatidylinositol metabolism. Inositol phosphate kinase with a broad substrate specificity. Phosphorylates inositol 1,4,5-trisphosphate (Ins(1,4,5)P3) first to inositol 1,3,4,5-tetrakisphosphate and then to inositol 1,3,4,5,6-pentakisphosphate (Ins(1,3,4,5,6)P5). Phosphorylates inositol 1,3,4,6-tetrakisphosphate (Ins(1,3,4,6)P4). Phosphorylates inositol 1,4,5,6-tetrakisphosphate (Ins(1,4,5,6)P4). Phosphorylates glycero-3-phospho-1D-myo-inositol 4,5-bisphosphate to glycero-3-phospho-1D-myo-inositol 3,4,5-trisphosphate. Plays an important role in MLKL-mediated necroptosis via its role in the biosynthesis of inositol pentakisphosphate (InsP5) and inositol hexakisphosphate (InsP6). Binding of these highly phosphorylated inositol phosphates to MLKL mediates the release of an N-terminal auto-inhibitory region, leading to activation of the kinase. Essential for activated phospho-MLKL to oligomerize and localize to the cell membrane during necroptosis. Required for normal embryonic development, probably via its role in the biosynthesis of inositol 1,3,4,5,6-pentakisphosphate (Ins(1,3,4,5,6)P5) and inositol hexakisphosphate (InsP6). The protein is Inositol polyphosphate multikinase (Ipmk) of Mus musculus (Mouse).